Here is a 627-residue protein sequence, read N- to C-terminus: 2-oxoacid:ferredoxin oxidoreductase 1, subunit alpha (627 aa).

The YPITP motif motif lies at 253 to 257; the sequence is YPITP. The substrate site is built by threonine 256 and arginine 344.

Heterodimer composed of an alpha and a beta subunit.

The catalysed reaction is a 2-oxocarboxylate + 2 oxidized [2Fe-2S]-[ferredoxin] + CoA = an acyl-CoA + 2 reduced [2Fe-2S]-[ferredoxin] + CO2 + H(+). With respect to regulation, inhibited by low concentration of 4-fluoro-7-nitrobenzofurazan (NBD-F). Functionally, catalyzes the coenzyme A-dependent oxidative decarboxylation of different 2-oxoacids such as 2-oxoglutarate, pyruvate and 2-oxobutyrate to form their CoA derivatives. The chain is 2-oxoacid:ferredoxin oxidoreductase 1, subunit alpha from Sulfurisphaera tokodaii (strain DSM 16993 / JCM 10545 / NBRC 100140 / 7) (Sulfolobus tokodaii).